The sequence spans 860 residues: Leucine--tRNA ligase (860 aa).

Positions 42-52 (PYPSGRLHMGH) match the 'HIGH' region motif. A 'KMSKS' region motif is present at residues 619-623 (KMSKS). Residue Lys622 participates in ATP binding.

The protein belongs to the class-I aminoacyl-tRNA synthetase family.

It localises to the cytoplasm. The enzyme catalyses tRNA(Leu) + L-leucine + ATP = L-leucyl-tRNA(Leu) + AMP + diphosphate. In Cronobacter sakazakii (strain ATCC BAA-894) (Enterobacter sakazakii), this protein is Leucine--tRNA ligase.